Here is a 252-residue protein sequence, read N- to C-terminus: Hydroxyacylglutathione hydrolase (252 aa).

Zn(2+)-binding residues include His54, His56, Asp58, His59, His111, Asp128, and His166.

Belongs to the metallo-beta-lactamase superfamily. Glyoxalase II family. In terms of assembly, monomer. Requires Zn(2+) as cofactor.

The enzyme catalyses an S-(2-hydroxyacyl)glutathione + H2O = a 2-hydroxy carboxylate + glutathione + H(+). Its pathway is secondary metabolite metabolism; methylglyoxal degradation; (R)-lactate from methylglyoxal: step 2/2. In terms of biological role, thiolesterase that catalyzes the hydrolysis of S-D-lactoyl-glutathione to form glutathione and D-lactic acid. The polypeptide is Hydroxyacylglutathione hydrolase (Vibrio cholerae serotype O1 (strain ATCC 39541 / Classical Ogawa 395 / O395)).